A 190-amino-acid polypeptide reads, in one-letter code: Xanthine phosphoribosyltransferase (190 aa).

L20 and N27 together coordinate xanthine. 128 to 132 serves as a coordination point for 5-phospho-alpha-D-ribose 1-diphosphate; that stretch reads ANGHA. K156 lines the xanthine pocket.

It belongs to the purine/pyrimidine phosphoribosyltransferase family. Xpt subfamily. Homodimer.

The protein localises to the cytoplasm. It carries out the reaction XMP + diphosphate = xanthine + 5-phospho-alpha-D-ribose 1-diphosphate. The protein operates within purine metabolism; XMP biosynthesis via salvage pathway; XMP from xanthine: step 1/1. Converts the preformed base xanthine, a product of nucleic acid breakdown, to xanthosine 5'-monophosphate (XMP), so it can be reused for RNA or DNA synthesis. The sequence is that of Xanthine phosphoribosyltransferase from Pseudomonas aeruginosa (strain ATCC 15692 / DSM 22644 / CIP 104116 / JCM 14847 / LMG 12228 / 1C / PRS 101 / PAO1).